We begin with the raw amino-acid sequence, 408 residues long: Phosphoglycerate kinase (408 aa).

Substrate contacts are provided by residues 24 to 26 (DLN), Arg-40, 63 to 66 (HLGR), Arg-122, and Arg-166. Residues Lys-216, Gly-304, Glu-335, and 364–367 (GGDS) contribute to the ATP site.

The protein belongs to the phosphoglycerate kinase family. As to quaternary structure, monomer.

The protein resides in the cytoplasm. The enzyme catalyses (2R)-3-phosphoglycerate + ATP = (2R)-3-phospho-glyceroyl phosphate + ADP. The protein operates within carbohydrate degradation; glycolysis; pyruvate from D-glyceraldehyde 3-phosphate: step 2/5. The protein is Phosphoglycerate kinase of Mycolicibacterium smegmatis (strain ATCC 700084 / mc(2)155) (Mycobacterium smegmatis).